The chain runs to 190 residues: Protein hunchback (190 aa).

3 disordered regions span residues glutamate 13–leucine 59, alanine 86–methionine 110, and glutamine 142–alanine 190. The segment covering histidine 17–leucine 31 has biased composition (basic residues). Over residues proline 90–proline 100 the composition is skewed to polar residues. Basic and acidic residues predominate over residues glutamate 171–alanine 190.

The protein belongs to the hunchback C2H2-type zinc-finger protein family.

It is found in the nucleus. Gap class segmentation protein that controls development of head structures. The polypeptide is Protein hunchback (hb) (Scaptomyza crassifemur (Fruit fly)).